A 550-amino-acid chain; its full sequence is Dipeptide-binding protein (550 aa).

Residues 1–22 form the signal peptide; that stretch reads MKQAKIIGLSTVIALSGIILVA. Cys23 carries N-palmitoyl cysteine lipidation. Cys23 carries the S-diacylglycerol cysteine lipid modification.

The protein belongs to the bacterial solute-binding protein 5 family. In terms of assembly, the complex is composed of two ATP-binding proteins (DppD and DppF), two transmembrane proteins (DppB and DppC) and a solute-binding protein (DppA).

Its subcellular location is the cell membrane. Functionally, part of the ABC transporter DppABCDF involved in dipeptide transport. Binds di- and tripeptides with high affinity. Requires a free N-terminal alpha-amino group and an alpha-peptide bound contiguous with the N-terminal amino group, has a strong selectivity for L-residues, and shows preference for dipeptides containing methionine or arginine, followed by hydrophobic tripeptides consisting of leucine or valine residues. The sequence is that of Dipeptide-binding protein from Lactococcus lactis subsp. cremoris (strain MG1363).